Here is a 145-residue protein sequence, read N- to C-terminus: Neuromedin-S (145 aa).

Positions 1-27 are cleaved as a signal peptide; sequence MRSEKHLLPLPLLLAICCLGTLHLSSG. 2 consecutive propeptides follow at residues 28 to 89 and 92 to 117; these read FPQS…HEIY and FLFQFSRAKDPSLKIGESQIATAEYT. At N136 the chain carries Asparagine amide. Positions 140–145 are excised as a propeptide; that stretch reads VSINEH.

Belongs to the NmU family. In terms of tissue distribution, expressed by the skin glands.

The protein resides in the secreted. Stimulates uterine smooth muscle contraction (EC(50)=1.6 nM). Synthetic peptide NmS-17 induces calcium mobilization in CHO cells transfected with either human FM-3/GPR66 (EC(50)=0.085 nM) or FM-4/TGR-1 (EC(50)=0.231 nM) NmU/NmS receptors. The polypeptide is Neuromedin-S (nms) (Bombina maxima (Giant fire-bellied toad)).